Here is a 618-residue protein sequence, read N- to C-terminus: Sodium-coupled monocarboxylate transporter 2 (618 aa).

Residues Met1–Trp9 are Extracellular-facing. The chain crosses the membrane as a helical span at residues Asp10–Ile30. Residues Lys31–Gln47 are Cytoplasmic-facing. A helical transmembrane segment spans residues Met48–Leu68. Topologically, residues Gly69–Leu82 are extracellular. Residues Val83–Phe103 traverse the membrane as a helical segment. The Cytoplasmic portion of the chain corresponds to Tyr104–Thr128. The chain crosses the membrane as a helical span at residues Val129–Ala149. At Leu150–Asp157 the chain is on the extracellular side. A helical transmembrane segment spans residues Leu158 to Leu178. The Cytoplasmic segment spans residues Lys179 to Ala180. A helical transmembrane segment spans residues Val181–Ile201. Residues Gln202 to Arg235 are Extracellular-facing. The chain crosses the membrane as a helical span at residues His236 to Asn256. The Cytoplasmic segment spans residues Gln257 to Ala275. Residues Leu276–Ile296 form a helical membrane-spanning segment. Topologically, residues Met297–Tyr321 are extracellular. Residues Phe322–Phe342 traverse the membrane as a helical segment. Residues Ser343 to Cys385 lie on the Cytoplasmic side of the membrane. Residues Leu386–Val406 form a helical membrane-spanning segment. Topologically, residues Gln407–Ser411 are extracellular. The chain crosses the membrane as a helical span at residues Ile412–Phe432. Residues Val433–Gly437 are Cytoplasmic-facing. Residues Ala438 to Ile458 form a helical membrane-spanning segment. Over Tyr459–Tyr504 the chain is Extracellular. The N-linked (GlcNAc...) asparagine glycan is linked to Asn480. The helical transmembrane segment at Leu505–Ile525 threads the bilayer. The Cytoplasmic portion of the chain corresponds to Thr526–Phe618.

Belongs to the sodium:solute symporter (SSF) (TC 2.A.21) family.

It localises to the apical cell membrane. It catalyses the reaction (S)-lactate(out) + Na(+)(out) = (S)-lactate(in) + Na(+)(in). The catalysed reaction is nicotinate(out) + Na(+)(out) = nicotinate(in) + Na(+)(in). The enzyme catalyses pyruvate(out) + Na(+)(out) = pyruvate(in) + Na(+)(in). It carries out the reaction propanoate(out) + Na(+)(out) = propanoate(in) + Na(+)(in). It catalyses the reaction butanoate(out) + Na(+)(out) = butanoate(in) + Na(+)(in). The catalysed reaction is acetoacetate(out) + Na(+)(out) = acetoacetate(in) + Na(+)(in). Cotransport of monocarboxylates and nicotinate strongly inhibited by ibuprofen, fenoprofen and ketoprofen. Its function is as follows. Acts as an electroneutral and low-affinity sodium (Na(+))-dependent sodium-coupled solute transporter. Catalyzes the transport across the plasma membrane of many monocarboxylates such as lactate, pyruvate, nicotinate, propionate, butyrate and beta-D-hydroxybutyrate. May be responsible for the first step of reabsorption of monocarboxylates from the lumen of the proximal tubule of the kidney and the small intestine. May play also a role in monocarboxylates transport in the retina. In Homo sapiens (Human), this protein is Sodium-coupled monocarboxylate transporter 2.